The chain runs to 778 residues: MPISSPGTRCSSDLKDPTLQQYSAESVSTEQSLGTFEESKGSITENYVQDSSVDEHDDGNWQPMEVISLEPTHLINDIDDDNEIIEEKKETEKVEESELEPRYTRVFRDEDDDQKHQLDSEAIKLLDIADHGNEEISMDSQLEITGNILSETEKMAYAGVCRLLILKMVDKIACFTTLPWYRGECKAALEDTIMWADKTTSCIYEHLGVTVEEQKMIENLHKHSVQIDDLSKILVSAHRAQTVSSLDAVLVDEVESSDSLSSLGKEKPVQIDVRWTVLCDLFLVLISKSLYDCRSRSLLMAVGEVLDINEFDVAKFEKHIVETIQIDDTGELEAGSSANTEAVMKLRRKVSRRKKYILMGLAGIGGGLVIGLSSGLLAPIISAGIGAAFTTVGLSGVATSGFLAGGGSAALITAGGAISGAHIGTTGMAHRKADVKTFEFRPLHAQRRANVIVTVSGWMLSKEDDVRLSFATLDPIVGDIYSVFWEPEMLASAGQTMNILATEVVTQSLQQVLGSTVLVSLMGALQWPLILTKLGYLIDNPWNNSLDRAKATGQLLADMLCYRSLGVRPVTLVGYSLGARVIYYCLRELEKKKEFSIIENVYLFGTPVIFKRTSWLKAASVVSGRFVNGYKKNDWILGYLFRATSGGIGRVAGLRQIDCIPGIENIDVTNLVSGHLAYRESMPILLAAVGFEVLDEEVDLVSEPIPEPLRERQSQLLYEIEAEECQNKQKELIEKSLMQKGRSLSPKKSNAFFDSKKIREELKKVKKKYGSSFNSRWY.

Composition is skewed to polar residues over residues 1 to 11 (MPISSPGTRCS), 18 to 34 (TLQQ…QSLG), and 41 to 51 (GSITENYVQDS). Residues 1–60 (MPISSPGTRCSSDLKDPTLQQYSAESVSTEQSLGTFEESKGSITENYVQDSSVDEHDDGN) form a disordered region. Transmembrane regions (helical) follow at residues 356–381 (YILM…APII) and 401–423 (GFLA…GAHI).

It belongs to the TMCO4 family.

The protein localises to the golgi apparatus membrane. This is an uncharacterized protein from Schizosaccharomyces pombe (strain 972 / ATCC 24843) (Fission yeast).